The following is a 389-amino-acid chain: MRSTPLHPVARLPEEWSASLAARGERSFTAKQVFQWIHRRGVLDPAAMTNLPARLREHLAAEGLGEVLTPERVHRSEDGTRKLLLRLRDGATIETVLLPSVSGPGSQAQLDADAAAALDDDEDDDAAAEAGAAPRVRVTQCISTQVGCAMGCGFCASGVAGLKRHLGAEEIAGQVLLGRAMLEEGEELRNVVYMGMGEPLHNYEATARSLRLLTHPEGINLSTRRVTVSTSGLVPEIARLGADFGGQIALAISLHAADDETRSALMPINRKHPLDELLAALRAYPLPRRRRITIEYTLVAGQNDDPAEARRLAKLLRGLPVKINLIPMNPIEASSLGPPAQERVAAFQEVLTQAGYSCFVRRRRGDDVSAACGQLVLLGAKPKVRRALG.

Residue E94 is the Proton acceptor of the active site. The Radical SAM core domain occupies 134–367 (PRVRVTQCIS…CFVRRRRGDD (234 aa)). A disulfide bond links C141 and C372. Positions 148, 152, and 155 each coordinate [4Fe-4S] cluster. S-adenosyl-L-methionine-binding positions include 197–198 (GE), S229, 253–255 (SLH), and N329. Residue C372 is the S-methylcysteine intermediate of the active site.

It belongs to the radical SAM superfamily. RlmN family. Requires [4Fe-4S] cluster as cofactor.

The protein resides in the cytoplasm. It carries out the reaction adenosine(2503) in 23S rRNA + 2 reduced [2Fe-2S]-[ferredoxin] + 2 S-adenosyl-L-methionine = 2-methyladenosine(2503) in 23S rRNA + 5'-deoxyadenosine + L-methionine + 2 oxidized [2Fe-2S]-[ferredoxin] + S-adenosyl-L-homocysteine. The catalysed reaction is adenosine(37) in tRNA + 2 reduced [2Fe-2S]-[ferredoxin] + 2 S-adenosyl-L-methionine = 2-methyladenosine(37) in tRNA + 5'-deoxyadenosine + L-methionine + 2 oxidized [2Fe-2S]-[ferredoxin] + S-adenosyl-L-homocysteine. Specifically methylates position 2 of adenine 2503 in 23S rRNA and position 2 of adenine 37 in tRNAs. m2A2503 modification seems to play a crucial role in the proofreading step occurring at the peptidyl transferase center and thus would serve to optimize ribosomal fidelity. The sequence is that of Dual-specificity RNA methyltransferase RlmN from Sorangium cellulosum (strain So ce56) (Polyangium cellulosum (strain So ce56)).